Consider the following 609-residue polypeptide: Glutamine--fructose-6-phosphate aminotransferase [isomerizing] (609 aa).

The Nucleophile; for GATase activity role is filled by Cys2. One can recognise a Glutamine amidotransferase type-2 domain in the interval 2-218; sequence CGIVGAIAQR…EGDIAEITRR (217 aa). 2 SIS domains span residues 286 to 426 and 458 to 599; these read ADEL…LKGL and LAED…VDQP. Lys604 serves as the catalytic For Fru-6P isomerization activity.

Homodimer.

It localises to the cytoplasm. It catalyses the reaction D-fructose 6-phosphate + L-glutamine = D-glucosamine 6-phosphate + L-glutamate. Functionally, catalyzes the first step in hexosamine metabolism, converting fructose-6P into glucosamine-6P using glutamine as a nitrogen source. The protein is Glutamine--fructose-6-phosphate aminotransferase [isomerizing] of Escherichia coli O6:H1 (strain CFT073 / ATCC 700928 / UPEC).